The sequence spans 201 residues: Small ribosomal subunit protein uS4 (201 aa).

Residues methionine 1 to arginine 38 form a disordered region. One can recognise an S4 RNA-binding domain in the interval serine 91 to alanine 157.

This sequence belongs to the universal ribosomal protein uS4 family. As to quaternary structure, part of the 30S ribosomal subunit. Contacts protein S5. The interaction surface between S4 and S5 is involved in control of translational fidelity.

Its function is as follows. One of the primary rRNA binding proteins, it binds directly to 16S rRNA where it nucleates assembly of the body of the 30S subunit. With S5 and S12 plays an important role in translational accuracy. This is Small ribosomal subunit protein uS4 from Mycobacterium sp. (strain JLS).